A 255-amino-acid chain; its full sequence is Octanoyltransferase (255 aa).

A disordered region spans residues 1–21; the sequence is MCATPVSPSPESPRSAQAGAA. In terms of domain architecture, BPL/LPL catalytic spans 56–242; sequence FETSDEIWLV…SLIANIDGIP (187 aa). Substrate contacts are provided by residues 96 to 103, 173 to 175, and 186 to 188; these read RGGQITYH, ALG, and GVS. Cys-204 functions as the Acyl-thioester intermediate in the catalytic mechanism.

It belongs to the LipB family.

It is found in the cytoplasm. It carries out the reaction octanoyl-[ACP] + L-lysyl-[protein] = N(6)-octanoyl-L-lysyl-[protein] + holo-[ACP] + H(+). It functions in the pathway protein modification; protein lipoylation via endogenous pathway; protein N(6)-(lipoyl)lysine from octanoyl-[acyl-carrier-protein]: step 1/2. Catalyzes the transfer of endogenously produced octanoic acid from octanoyl-acyl-carrier-protein onto the lipoyl domains of lipoate-dependent enzymes. Lipoyl-ACP can also act as a substrate although octanoyl-ACP is likely to be the physiological substrate. This is Octanoyltransferase from Paraburkholderia phymatum (strain DSM 17167 / CIP 108236 / LMG 21445 / STM815) (Burkholderia phymatum).